Consider the following 187-residue polypeptide: Thioredoxin F, chloroplastic (187 aa).

Residues methionine 1–glutamate 72 constitute a chloroplast transit peptide. The Thioredoxin domain maps to alanine 73–serine 186. Active-site nucleophile residues include cysteine 111 and cysteine 114. Cysteines 111 and 114 form a disulfide.

This sequence belongs to the thioredoxin family. Plant F-type subfamily.

The protein localises to the plastid. Its subcellular location is the chloroplast. Thiol-disulfide oxidoreductase involved in the redox regulation of enzymes of both reductive pentose phosphate pathway (Calvin-Benson cycle) and oxidative pentose phosphate pathway. In Oryza sativa subsp. japonica (Rice), this protein is Thioredoxin F, chloroplastic.